The chain runs to 357 residues: Mitogen-activated protein kinase kinase SIPKK (357 aa).

In terms of domain architecture, Protein kinase spans 70–330; that stretch reads FEAVKVIGKG…ANELMRHPFI (261 aa). Residues 76-84 and lysine 99 contribute to the ATP site; that span reads IGKGNGGIV. The active-site Proton acceptor is the aspartate 192.

This sequence belongs to the protein kinase superfamily. STE Ser/Thr protein kinase family. MAP kinase kinase subfamily. In terms of assembly, interacts with SIPK.

It catalyses the reaction L-tyrosyl-[protein] + ATP = O-phospho-L-tyrosyl-[protein] + ADP + H(+). The enzyme catalyses L-seryl-[protein] + ATP = O-phospho-L-seryl-[protein] + ADP + H(+). It carries out the reaction L-threonyl-[protein] + ATP = O-phospho-L-threonyl-[protein] + ADP + H(+). Phosphorylates myelin basic protein (MBP) in vitro. May be involved in disease resistance. The protein is Mitogen-activated protein kinase kinase SIPKK of Nicotiana tabacum (Common tobacco).